The following is a 284-amino-acid chain: Acetyl-coenzyme A carboxylase carboxyl transferase subunit beta (284 aa).

A CoA carboxyltransferase N-terminal domain is found at 25–284 (MWVKCPGCSA…ILGILYRPAA (260 aa)). 4 residues coordinate Zn(2+): Cys-29, Cys-32, Cys-48, and Cys-51. The segment at 29-51 (CPGCSATLLAKDLDANLNVCPTC) adopts a C4-type zinc-finger fold.

The protein belongs to the AccD/PCCB family. In terms of assembly, acetyl-CoA carboxylase is a heterohexamer composed of biotin carboxyl carrier protein (AccB), biotin carboxylase (AccC) and two subunits each of ACCase subunit alpha (AccA) and ACCase subunit beta (AccD). Requires Zn(2+) as cofactor.

The protein localises to the cytoplasm. It catalyses the reaction N(6)-carboxybiotinyl-L-lysyl-[protein] + acetyl-CoA = N(6)-biotinyl-L-lysyl-[protein] + malonyl-CoA. It functions in the pathway lipid metabolism; malonyl-CoA biosynthesis; malonyl-CoA from acetyl-CoA: step 1/1. Its function is as follows. Component of the acetyl coenzyme A carboxylase (ACC) complex. Biotin carboxylase (BC) catalyzes the carboxylation of biotin on its carrier protein (BCCP) and then the CO(2) group is transferred by the transcarboxylase to acetyl-CoA to form malonyl-CoA. The sequence is that of Acetyl-coenzyme A carboxylase carboxyl transferase subunit beta from Pelobacter propionicus (strain DSM 2379 / NBRC 103807 / OttBd1).